The primary structure comprises 299 residues: Bifunctional protein FolD (299 aa).

Residues 166–168, Ser-191, and Ile-232 each bind NADP(+); that span reads GRS.

Belongs to the tetrahydrofolate dehydrogenase/cyclohydrolase family. As to quaternary structure, homodimer.

It carries out the reaction (6R)-5,10-methylene-5,6,7,8-tetrahydrofolate + NADP(+) = (6R)-5,10-methenyltetrahydrofolate + NADPH. The enzyme catalyses (6R)-5,10-methenyltetrahydrofolate + H2O = (6R)-10-formyltetrahydrofolate + H(+). It functions in the pathway one-carbon metabolism; tetrahydrofolate interconversion. In terms of biological role, catalyzes the oxidation of 5,10-methylenetetrahydrofolate to 5,10-methenyltetrahydrofolate and then the hydrolysis of 5,10-methenyltetrahydrofolate to 10-formyltetrahydrofolate. In Anaplasma marginale (strain St. Maries), this protein is Bifunctional protein FolD.